A 240-amino-acid polypeptide reads, in one-letter code: Small ribosomal subunit protein uS2 (240 aa).

Belongs to the universal ribosomal protein uS2 family. Component of the small ribosomal subunit. Mature ribosomes consist of a small (40S) and a large (60S) subunit. The 40S subunit contains about 33 different proteins and 1 molecule of RNA (18S). The 60S subunit contains about 49 different proteins and 3 molecules of RNA (25S, 5.8S and 5S). Interacts with RPS21.

The protein localises to the cytoplasm. Functionally, required for the assembly and/or stability of the 40S ribosomal subunit. Required for the processing of the 20S rRNA-precursor to mature 18S rRNA in a late step of the maturation of 40S ribosomal subunits. In Enterocytozoon bieneusi (strain H348) (Microsporidian parasite), this protein is Small ribosomal subunit protein uS2.